Here is a 392-residue protein sequence, read N- to C-terminus: Probable tRNA sulfurtransferase (392 aa).

Residues 59-167 (ADITDRVKKV…DQAFVFSNKI (109 aa)) enclose the THUMP domain. Residues 184-185 (LL), 209-210 (HF), arginine 266, glycine 288, and glutamine 297 contribute to the ATP site.

The protein belongs to the ThiI family.

It is found in the cytoplasm. The enzyme catalyses [ThiI sulfur-carrier protein]-S-sulfanyl-L-cysteine + a uridine in tRNA + 2 reduced [2Fe-2S]-[ferredoxin] + ATP + H(+) = [ThiI sulfur-carrier protein]-L-cysteine + a 4-thiouridine in tRNA + 2 oxidized [2Fe-2S]-[ferredoxin] + AMP + diphosphate. It catalyses the reaction [ThiS sulfur-carrier protein]-C-terminal Gly-Gly-AMP + S-sulfanyl-L-cysteinyl-[cysteine desulfurase] + AH2 = [ThiS sulfur-carrier protein]-C-terminal-Gly-aminoethanethioate + L-cysteinyl-[cysteine desulfurase] + A + AMP + 2 H(+). It functions in the pathway cofactor biosynthesis; thiamine diphosphate biosynthesis. In terms of biological role, catalyzes the ATP-dependent transfer of a sulfur to tRNA to produce 4-thiouridine in position 8 of tRNAs, which functions as a near-UV photosensor. Also catalyzes the transfer of sulfur to the sulfur carrier protein ThiS, forming ThiS-thiocarboxylate. This is a step in the synthesis of thiazole, in the thiamine biosynthesis pathway. The sulfur is donated as persulfide by IscS. In Alkaliphilus oremlandii (strain OhILAs) (Clostridium oremlandii (strain OhILAs)), this protein is Probable tRNA sulfurtransferase.